Here is a 224-residue protein sequence, read N- to C-terminus: Charged multivesicular body protein 4c (224 aa).

Disordered regions lie at residues 1 to 21 (MSVF…PTPQ) and 182 to 224 (SGPE…AWAM). Gly residues predominate over residues 7 to 17 (LFGGGGKGGKG). The stretch at 21–221 (QEAIQKLRET…DEDDMEELKA (201 aa)) forms a coiled coil.

Belongs to the SNF7 family. Probable core component of the endosomal sorting required for transport complex III (ESCRT-III). ESCRT-III components are thought to multimerize to form a flat lattice on the perimeter membrane of the endosome.

It is found in the cytoplasm. It localises to the cytosol. The protein localises to the late endosome membrane. Its function is as follows. Probable core component of the endosomal sorting required for transport complex III (ESCRT-III) which is involved in multivesicular bodies (MVBs) formation and sorting of endosomal cargo proteins into MVBs. MVBs contain intraluminal vesicles (ILVs) that are generated by invagination and scission from the limiting membrane of the endosome and mostly are delivered to lysosomes enabling degradation of membrane proteins, such as stimulated growth factor receptors, lysosomal enzymes and lipids. Key component of the cytokinesis checkpoint, a process required to delay abscission to prevent both premature resolution of intercellular chromosome bridges and accumulation of DNA damage. The protein is Charged multivesicular body protein 4c (chmp4c) of Danio rerio (Zebrafish).